The chain runs to 314 residues: MPNLKGIRDRIQSVKNTKKITEAMRLVAAAKVRRAQEQVTSTRPFANTLLQVLYSLKSRLRLEEADLPLLKQREVKCVGLLVITGDRGLCGGYNANIIRKAERRAKELAAAGINYKFVLVGRKAVQYFQNRQAPVAKTYAGLEQIPSAAEASDIADELLSLFLSEEVDKIELIYTRFVSLISSQPVVQTLLPLVPEALTNPDDETFNLITRGGKFQVEREKVATEVKELPADMIFEQDPKDILNALLPLYLSNQLLRALQEGAASELAARMTAMNNASDNASDLMKTLTLSYNKARQAAITQELSEVVAGANAL.

Belongs to the ATPase gamma chain family. In terms of assembly, F-type ATPases have 2 components, CF(1) - the catalytic core - and CF(0) - the membrane proton channel. CF(1) has five subunits: alpha(3), beta(3), gamma(1), delta(1), epsilon(1). CF(0) has three main subunits: a, b and c.

It is found in the cellular thylakoid membrane. In terms of biological role, produces ATP from ADP in the presence of a proton gradient across the membrane. The gamma chain is believed to be important in regulating ATPase activity and the flow of protons through the CF(0) complex. This Picosynechococcus sp. (strain ATCC 27264 / PCC 7002 / PR-6) (Agmenellum quadruplicatum) protein is ATP synthase gamma chain.